We begin with the raw amino-acid sequence, 623 residues long: V-type proton ATPase catalytic subunit A (623 aa).

252–259 (GAFGCGKT) lines the ATP pocket.

It belongs to the ATPase alpha/beta chains family. As to quaternary structure, V-ATPase is a heteromultimeric enzyme composed of a peripheral catalytic V1 complex (components A to H) attached to an integral membrane V0 proton pore complex (components: a, c, c'', d and e). Binds to the deubiquitinating enzyme AMSH3.

Its subcellular location is the vacuole membrane. It carries out the reaction ATP + H2O + 4 H(+)(in) = ADP + phosphate + 5 H(+)(out). Its function is as follows. Catalytic subunit of the peripheral V1 complex of vacuolar ATPase. V-ATPase vacuolar ATPase is responsible for acidifying a variety of intracellular compartments in eukaryotic cells. The polypeptide is V-type proton ATPase catalytic subunit A (VHA-A) (Arabidopsis thaliana (Mouse-ear cress)).